The chain runs to 348 residues: Histidinol-phosphate aminotransferase (348 aa).

A disordered region spans residues 1–31; the sequence is MLPTRDCVRQTPAYTPGEQPQTAGFTKLNTN. The segment covering 18–31 has biased composition (polar residues); sequence EQPQTAGFTKLNTN. The residue at position 207 (Lys-207) is an N6-(pyridoxal phosphate)lysine.

The protein belongs to the class-II pyridoxal-phosphate-dependent aminotransferase family. Histidinol-phosphate aminotransferase subfamily. As to quaternary structure, homodimer. Pyridoxal 5'-phosphate is required as a cofactor.

The catalysed reaction is L-histidinol phosphate + 2-oxoglutarate = 3-(imidazol-4-yl)-2-oxopropyl phosphate + L-glutamate. It participates in amino-acid biosynthesis; L-histidine biosynthesis; L-histidine from 5-phospho-alpha-D-ribose 1-diphosphate: step 7/9. In Microcystis aeruginosa (strain NIES-843 / IAM M-2473), this protein is Histidinol-phosphate aminotransferase.